A 224-amino-acid polypeptide reads, in one-letter code: MLDNPKLTARQQQVLDLIQNTMARTGAPPTRAEIAAELGFKSANAAEEHLQALARKGAIELVSGTSRGIRLHSETLRSIHAARSGPSGAGNPGSSPWVLPLIGRVAAGSPILAQEHVEQTYSVENGLFQHKPDYLLKVRGMSMRDAGIIDGDLLAVQATREARNGQIIVARLGDDVTVKRLRRTASTIELLPENPDYPVIVVQPGEPFEIEGLAVGLIRNTMLM.

A DNA-binding region (H-T-H motif) is located at residues 31 to 51 (RAEIAAELGFKSANAAEEHLQ). Active-site for autocatalytic cleavage activity residues include Ser-142 and Lys-179.

It belongs to the peptidase S24 family. Homodimer.

The catalysed reaction is Hydrolysis of Ala-|-Gly bond in repressor LexA.. Its function is as follows. Represses a number of genes involved in the response to DNA damage (SOS response), including recA and lexA. In the presence of single-stranded DNA, RecA interacts with LexA causing an autocatalytic cleavage which disrupts the DNA-binding part of LexA, leading to derepression of the SOS regulon and eventually DNA repair. The polypeptide is LexA repressor (Verminephrobacter eiseniae (strain EF01-2)).